Here is a 127-residue protein sequence, read N- to C-terminus: Aspartate 1-decarboxylase (127 aa).

Residue Ser-25 is the Schiff-base intermediate with substrate; via pyruvic acid of the active site. Position 25 is a pyruvic acid (Ser) (Ser-25). Thr-57 contacts substrate. Tyr-58 serves as the catalytic Proton donor. 73-75 (GAA) lines the substrate pocket.

Belongs to the PanD family. In terms of assembly, heterooctamer of four alpha and four beta subunits. Requires pyruvate as cofactor. In terms of processing, is synthesized initially as an inactive proenzyme, which is activated by self-cleavage at a specific serine bond to produce a beta-subunit with a hydroxyl group at its C-terminus and an alpha-subunit with a pyruvoyl group at its N-terminus.

Its subcellular location is the cytoplasm. The enzyme catalyses L-aspartate + H(+) = beta-alanine + CO2. The protein operates within cofactor biosynthesis; (R)-pantothenate biosynthesis; beta-alanine from L-aspartate: step 1/1. Catalyzes the pyruvoyl-dependent decarboxylation of aspartate to produce beta-alanine. The chain is Aspartate 1-decarboxylase from Staphylococcus aureus (strain MSSA476).